We begin with the raw amino-acid sequence, 31 residues long: Delta-actitoxin-Dar1b (31 aa).

It belongs to the sea anemone short toxin (type III) family. Post-translationally, contains 4 disulfide bonds.

The protein resides in the secreted. It localises to the nematocyst. In terms of biological role, binds specifically to voltage-gated sodium channels (Nav), thereby delaying their inactivation during signal transduction. The protein is Delta-actitoxin-Dar1b of Dofleinia armata (Armed anemone).